The following is a 131-amino-acid chain: Large ribosomal subunit protein bL17 (131 aa).

It belongs to the bacterial ribosomal protein bL17 family. In terms of assembly, part of the 50S ribosomal subunit. Contacts protein L32.

This chain is Large ribosomal subunit protein bL17, found in Vesicomyosocius okutanii subsp. Calyptogena okutanii (strain HA).